Consider the following 201-residue polypeptide: Transcription factor MYB82 (201 aa).

HTH myb-type domains follow at residues 9-61 and 62-116; these read KSYV…KNYL and RPNI…NKKP. DNA-binding regions (H-T-H motif) lie at residues 37–61 and 89–112; these read WADI…KNYL and WSLI…NTHL. The tract at residues 112–133 is disordered; the sequence is LNKKPNSRRQNAPESIVGATPF.

As to quaternary structure, homodimer and heterodimer with GL1. Part of the WD40-bHLH-MYB complex. Interacts with BHLH012/MYC1 and BHLH042/TT8. Interacts (via N-terminus) with GL1 and GL3. Mainly expressed in the trichomes of new leaves.

The protein resides in the nucleus. Functionally, transcription activation factor positively regulating trichomes development. Has a function nearly equivalent to that of GL1 and can complement gl1 mutants. The protein is Transcription factor MYB82 (MYB82) of Arabidopsis thaliana (Mouse-ear cress).